The primary structure comprises 441 residues: Proline--tRNA ligase (441 aa).

It belongs to the class-II aminoacyl-tRNA synthetase family. ProS type 2 subfamily. In terms of assembly, homodimer.

Its subcellular location is the cytoplasm. It carries out the reaction tRNA(Pro) + L-proline + ATP = L-prolyl-tRNA(Pro) + AMP + diphosphate. Functionally, catalyzes the attachment of proline to tRNA(Pro) in a two-step reaction: proline is first activated by ATP to form Pro-AMP and then transferred to the acceptor end of tRNA(Pro). The chain is Proline--tRNA ligase from Bartonella quintana (strain Toulouse) (Rochalimaea quintana).